We begin with the raw amino-acid sequence, 155 residues long: Deoxyuridine 5'-triphosphate nucleotidohydrolase (155 aa).

Substrate contacts are provided by residues 74-76, N87, and 91-93; these read RSG and TID.

It belongs to the dUTPase family. Mg(2+) serves as cofactor.

The enzyme catalyses dUTP + H2O = dUMP + diphosphate + H(+). Its pathway is pyrimidine metabolism; dUMP biosynthesis; dUMP from dCTP (dUTP route): step 2/2. Functionally, this enzyme is involved in nucleotide metabolism: it produces dUMP, the immediate precursor of thymidine nucleotides and it decreases the intracellular concentration of dUTP so that uracil cannot be incorporated into DNA. The chain is Deoxyuridine 5'-triphosphate nucleotidohydrolase from Dinoroseobacter shibae (strain DSM 16493 / NCIMB 14021 / DFL 12).